The following is a 381-amino-acid chain: Creatine kinase M-type (381 aa).

One can recognise a Phosphagen kinase N-terminal domain in the interval Lys-11–Gly-98. One can recognise a Phosphagen kinase C-terminal domain in the interval Tyr-125–Leu-367. Ser-128–Arg-132 is an ATP binding site. Ser-164 carries the post-translational modification Phosphoserine. Thr-166 carries the phosphothreonine modification. Ser-178 carries the post-translational modification Phosphoserine. At Thr-180 the chain carries Phosphothreonine. His-191 is an ATP binding site. Ser-199 bears the Phosphoserine mark. The ATP site is built by Arg-236 and Arg-292. A phosphothreonine mark is found at Thr-313 and Thr-322. ATP contacts are provided by residues Arg-320 to Val-325 and Asp-335. At Ser-372 the chain carries Phosphoserine.

This sequence belongs to the ATP:guanido phosphotransferase family. In terms of assembly, dimer of identical or non-identical chains, which can be either B (brain type) or M (muscle type). With MM being the major form in skeletal muscle and myocardium, MB existing in myocardium, and BB existing in many tissues, especially brain.

Its subcellular location is the cytoplasm. The enzyme catalyses creatine + ATP = N-phosphocreatine + ADP + H(+). Functionally, reversibly catalyzes the transfer of phosphate between ATP and various phosphogens (e.g. creatine phosphate). Creatine kinase isoenzymes play a central role in energy transduction in tissues with large, fluctuating energy demands, such as skeletal muscle, heart, brain and spermatozoa. The protein is Creatine kinase M-type (Ckm) of Mus musculus (Mouse).